Here is a 281-residue protein sequence, read N- to C-terminus: Elongation factor 1-delta (281 aa).

Alanine 2 is modified (N-acetylalanine). Residue lysine 17 is modified to N6-acetyllysine. 5 positions are modified to phosphoserine: serine 37, serine 44, serine 60, serine 86, and serine 106. Residues 80 to 115 (LVVRIASLEVENQSLRGVVQELQQAISKLEARLNVL) are leucine-zipper. The residue at position 107 (lysine 107) is an N6-acetyllysine. The residue at position 117 (lysine 117) is an N6-acetyllysine; alternate. Lysine 117 carries the N6-succinyllysine; alternate modification. Residues 118–172 (SSPGHRATAPQTQHVSPMRQVEPPAKKPATPAEDDEDDDIDLFGSDNEEEDKEAA) form a disordered region. Serine 119 is subject to Phosphoserine. Threonine 129 bears the Phosphothreonine mark. Serine 133 carries the phosphoserine modification. At threonine 147 the chain carries Phosphothreonine. Positions 149-169 (AEDDEDDDIDLFGSDNEEEDK) are enriched in acidic residues. The residue at position 162 (serine 162) is a Phosphoserine; by CK2. The tract at residues 173-281 (QLREERLRQY…SVDIAAFNKI (109 aa)) is catalytic (GEF).

Belongs to the EF-1-beta/EF-1-delta family. In terms of assembly, EF-1 is composed of 4 subunits: alpha, beta, delta isoform 1, and gamma. Isoform 2 interacts with HSF1 and NFE2L2.

The protein localises to the nucleus. Functionally, EF-1-beta and EF-1-delta stimulate the exchange of GDP bound to EF-1-alpha to GTP, regenerating EF-1-alpha for another round of transfer of aminoacyl-tRNAs to the ribosome. In terms of biological role, regulates induction of heat-shock-responsive genes through association with heat shock transcription factors and direct DNA-binding at heat shock promoter elements (HSE). This is Elongation factor 1-delta (EEF1D) from Macaca fascicularis (Crab-eating macaque).